Here is a 168-residue protein sequence, read N- to C-terminus: Large ribosomal subunit protein uL10 (168 aa).

This sequence belongs to the universal ribosomal protein uL10 family. Part of the ribosomal stalk of the 50S ribosomal subunit. The N-terminus interacts with L11 and the large rRNA to form the base of the stalk. The C-terminus forms an elongated spine to which L12 dimers bind in a sequential fashion forming a multimeric L10(L12)X complex.

Functionally, forms part of the ribosomal stalk, playing a central role in the interaction of the ribosome with GTP-bound translation factors. The sequence is that of Large ribosomal subunit protein uL10 from Lacticaseibacillus casei (strain BL23) (Lactobacillus casei).